A 507-amino-acid polypeptide reads, in one-letter code: Alkyl hydroperoxide reductase subunit F (507 aa).

207–222 (DVLIVGGGPASGSAAI) contributes to the FAD binding site. The cysteines at positions 335 and 338 are disulfide-linked. An NAD(+)-binding site is contributed by 347 to 361 (DVAVIGGGNSGVEAA). Residue 467 to 477 (TNVPGIFAAGD) participates in FAD binding.

It belongs to the class-II pyridine nucleotide-disulfide oxidoreductase family. Homodimer. It depends on FAD as a cofactor.

Serves to protect the cell against DNA damage by alkyl hydroperoxides. It can use either NADH or NADPH as electron donor for direct reduction of redox dyes or of alkyl hydroperoxides when combined with the AhpC protein. The polypeptide is Alkyl hydroperoxide reductase subunit F (ahpF) (Staphylococcus aureus (strain Mu50 / ATCC 700699)).